We begin with the raw amino-acid sequence, 427 residues long: 3-phosphoshikimate 1-carboxyvinyltransferase (427 aa).

Lys-22, Ser-23, and Arg-27 together coordinate 3-phosphoshikimate. Residue Lys-22 participates in phosphoenolpyruvate binding. 2 residues coordinate phosphoenolpyruvate: Gly-96 and Arg-124. The 3-phosphoshikimate site is built by Ser-169, Ser-170, Gln-171, Ser-197, Asp-313, Asn-336, and Lys-340. Gln-171 contacts phosphoenolpyruvate. Asp-313 serves as the catalytic Proton acceptor. Phosphoenolpyruvate contacts are provided by Arg-344, Arg-386, and Lys-411.

This sequence belongs to the EPSP synthase family. Monomer.

Its subcellular location is the cytoplasm. The enzyme catalyses 3-phosphoshikimate + phosphoenolpyruvate = 5-O-(1-carboxyvinyl)-3-phosphoshikimate + phosphate. The protein operates within metabolic intermediate biosynthesis; chorismate biosynthesis; chorismate from D-erythrose 4-phosphate and phosphoenolpyruvate: step 6/7. Functionally, catalyzes the transfer of the enolpyruvyl moiety of phosphoenolpyruvate (PEP) to the 5-hydroxyl of shikimate-3-phosphate (S3P) to produce enolpyruvyl shikimate-3-phosphate and inorganic phosphate. The sequence is that of 3-phosphoshikimate 1-carboxyvinyltransferase from Citrobacter koseri (strain ATCC BAA-895 / CDC 4225-83 / SGSC4696).